The sequence spans 485 residues: Pentatricopeptide repeat-containing protein At1g62720 (485 aa).

PPR repeat units lie at residues 68-102 (SIVD…GIGH), 103-137 (DLYS…GYEP), 138-172 (DVVT…GFRP), 173-207 (DVVI…GVRA), 208-242 (DAVT…DIVP), 243-277 (NVIT…CVDP), 278-312 (DVFT…GCLP), 313-347 (DVVT…GLVG), 348-378 (DTIT…MDSR), 380-414 (NIRT…EIEL), 415-449 (DITT…GLKP), and 450-484 (DVVS…GLLP).

Belongs to the PPR family. P subfamily.

The sequence is that of Pentatricopeptide repeat-containing protein At1g62720 from Arabidopsis thaliana (Mouse-ear cress).